The primary structure comprises 103 residues: Non-histone chromosomal protein 6 (103 aa).

2 disordered regions span residues 1-30 and 70-103; these read MPKAAAKSKTTGKVEKRRAKKDPNAPKRGL and KQRAPYEAKAAADKKRYEDEKQAYNAEADEEESS. A DNA-binding region (HMG box) is located at residues 26–94; it reads PKRGLSAYMF…RYEDEKQAYN (69 aa). The span at 70–91 shows a compositional bias: basic and acidic residues; it reads KQRAPYEAKAAADKKRYEDEKQ.

This sequence belongs to the NHP6 family. In terms of assembly, weakly associates with the stable heterodimer of ctc-1/pob3 and ctc-2/spt16 to form the FACT complex.

It localises to the nucleus. The protein resides in the chromosome. Functionally, DNA-binding protein that induces severe bending of DNA. Required for DNA-binding by the FACT complex, a general chromatin factor that acts to reorganize nucleosomes. The FACT complex is involved in multiple processes that require DNA as a template such as mRNA elongation, DNA replication and DNA repair. Also augments the fidelity of transcription by RNA polymerase III independently of any role in the FACT complex. The protein is Non-histone chromosomal protein 6 (nhp-1) of Neurospora crassa (strain ATCC 24698 / 74-OR23-1A / CBS 708.71 / DSM 1257 / FGSC 987).